A 612-amino-acid polypeptide reads, in one-letter code: Heparan-sulfate 6-O-sulfotransferase 2 (612 aa).

Residues 1–4 (MALP) are Cytoplasmic-facing. A helical; Signal-anchor for type II membrane protein membrane pass occupies residues 5-27 (AFAARALGPPLQPEQGAPARTTC). Residues 9–52 (RALGPPLQPEQGAPARTTCPRRHSRVEAELAASRPGSVAASVRA) are disordered. At 28–612 (PRRHSRVEAE…DYIGSVETWR (585 aa)) the chain is on the lumenal side. A glycan (N-linked (GlcNAc...) asparagine) is linked at Asn209. A 3'-phosphoadenylyl sulfate-binding site is contributed by 233-241 (HIQKTGGTT). Substrate-binding positions include 263-264 (KK), Arg280, Trp285, and His290. Catalysis depends on His290, which acts as the Proton acceptor. Arg325 and Ser333 together coordinate 3'-phosphoadenylyl sulfate. Substrate contacts are provided by His337 and Trp344. Residue Asn404 is glycosylated (N-linked (GlcNAc...) asparagine). 457-459 (TQY) provides a ligand contact to 3'-phosphoadenylyl sulfate. N-linked (GlcNAc...) asparagine glycosylation occurs at Asn460. 463 to 464 (RA) is a 3'-phosphoadenylyl sulfate binding site. Positions 529-612 (HFQSQSQGQS…DYIGSVETWR (84 aa)) are disordered. The span at 531-564 (QSQSQGQSQSQSPGQNLSQNPNPNPNQNLTQNLS) shows a compositional bias: low complexity. N-linked (GlcNAc...) asparagine glycans are attached at residues Asn546, Asn558, Asn562, Asn574, and Asn599. Polar residues predominate over residues 565–577 (HNLTPSSNPNSTQ).

The protein belongs to the sulfotransferase 6 family.

The protein resides in the membrane. The catalysed reaction is alpha-D-glucosaminyl-[heparan sulfate](n) + 3'-phosphoadenylyl sulfate = 6-sulfo-alpha-D-glucosaminyl-[heparan sulfate](n) + adenosine 3',5'-bisphosphate + H(+). In terms of biological role, 6-O-sulfation enzyme which catalyzes the transfer of sulfate from 3'-phosphoadenosine 5'-phosphosulfate (PAPS) to position 6 of the N-sulfoglucosamine residue (GlcNS) of heparan sulfate. The chain is Heparan-sulfate 6-O-sulfotransferase 2 (Hs6st2) from Mus musculus (Mouse).